We begin with the raw amino-acid sequence, 448 residues long: Cysteine--tRNA ligase (448 aa).

Zn(2+) is bound at residue Cys27. The 'HIGH' region signature appears at 29-39; sequence PTVYNYIHVGN. Zn(2+)-binding residues include Cys210, His235, and Glu239. Positions 267-271 match the 'KMSKS' region motif; that stretch reads KMSKS. Lys270 serves as a coordination point for ATP.

This sequence belongs to the class-I aminoacyl-tRNA synthetase family. As to quaternary structure, monomer. Requires Zn(2+) as cofactor.

It localises to the cytoplasm. It catalyses the reaction tRNA(Cys) + L-cysteine + ATP = L-cysteinyl-tRNA(Cys) + AMP + diphosphate. This chain is Cysteine--tRNA ligase, found in Lactococcus lactis subsp. cremoris (strain SK11).